A 281-amino-acid polypeptide reads, in one-letter code: E3 ubiquitin-protein ligase MARCHF5 (281 aa).

The RING-CH-type zinc finger occupies 9–78; the sequence is LPQTMDRSCW…PQCNAEYLIV (70 aa). The Zn(2+) site is built by cysteine 17, cysteine 20, cysteine 36, cysteine 38, histidine 46, cysteine 49, cysteine 68, and cysteine 71. 4 consecutive transmembrane segments (helical) span residues 102–122, 142–162, 212–232, and 241–261; these read FAAA…YGAV, PLFL…GKMI, ILCG…LMFS, and TILG…YFKQ.

Its subcellular location is the mitochondrion outer membrane. The protein resides in the endoplasmic reticulum membrane. The enzyme catalyses S-ubiquitinyl-[E2 ubiquitin-conjugating enzyme]-L-cysteine + [acceptor protein]-L-lysine = [E2 ubiquitin-conjugating enzyme]-L-cysteine + N(6)-ubiquitinyl-[acceptor protein]-L-lysine.. Its pathway is protein modification; protein ubiquitination. Its function is as follows. Mitochondrial E3 ubiquitin-protein ligase that plays a crucial role in the control of mitochondrial morphology by acting as a positive regulator of mitochondrial fission. May play a role in the prevention of cell senescence acting as a regulator of mitochondrial quality control. The sequence is that of E3 ubiquitin-protein ligase MARCHF5 (MARCHF5) from Gallus gallus (Chicken).